The sequence spans 92 residues: UPF0213 protein H16_B0156 (92 aa).

The GIY-YIG domain occupies S5–A80.

This sequence belongs to the UPF0213 family.

The protein is UPF0213 protein H16_B0156 of Cupriavidus necator (strain ATCC 17699 / DSM 428 / KCTC 22496 / NCIMB 10442 / H16 / Stanier 337) (Ralstonia eutropha).